The primary structure comprises 312 residues: MAIYLDFENHIKEIQNEIELALIRGDEDAKEILEKRLDKEVKSIYSNLTDFQKLQLARHPDRPYAMDYIDLILKDKYEVFGDRHYNDDKAIVCFIGKIDNVPVVVIGEEKGRGTKNKLLRNFGMPNPCGYRKALKMAKFAEKFNLPILMLVDTAGAYPGIGAEERGQSEAIAKNLQEFASLKVPTISVIIGEGGSGGALAIAVADKLAMMEYSIFSVISPEGCAAILWDDPSKTEVAIKAMKITPRDLKEAGLIDDIILEPSKGAHRDKFSAANTIKEYFLDALRTIQQDPHFLDNRYQKLMSLGSFVESMN.

The region spanning 36 to 286 (RLDKEVKSIY…KEYFLDALRT (251 aa)) is the CoA carboxyltransferase C-terminal domain.

The protein belongs to the AccA family. As to quaternary structure, acetyl-CoA carboxylase is a heterohexamer composed of biotin carboxyl carrier protein (AccB), biotin carboxylase (AccC) and two subunits each of ACCase subunit alpha (AccA) and ACCase subunit beta (AccD).

It localises to the cytoplasm. The catalysed reaction is N(6)-carboxybiotinyl-L-lysyl-[protein] + acetyl-CoA = N(6)-biotinyl-L-lysyl-[protein] + malonyl-CoA. It functions in the pathway lipid metabolism; malonyl-CoA biosynthesis; malonyl-CoA from acetyl-CoA: step 1/1. In terms of biological role, component of the acetyl coenzyme A carboxylase (ACC) complex. First, biotin carboxylase catalyzes the carboxylation of biotin on its carrier protein (BCCP) and then the CO(2) group is transferred by the carboxyltransferase to acetyl-CoA to form malonyl-CoA. In Helicobacter pylori (strain Shi470), this protein is Acetyl-coenzyme A carboxylase carboxyl transferase subunit alpha.